The primary structure comprises 262 residues: Abhydrolase domain-containing protein ACTT2 (262 aa).

The short motif at 260–262 (SKL) is the Peroxisomal targeting signal type 1 element.

This sequence belongs to the AB hydrolase superfamily. AKT2 hydrolase family.

Its subcellular location is the peroxisome. It functions in the pathway mycotoxin biosynthesis. In terms of biological role, abhydrolase domain-containing protein; part of the gene clusters that mediate the biosynthesis of the host-selective toxins (HSTs) ACT-toxins responsible for brown spot of tangerine disease by the tangerine pathotype which affects tangerines and mandarins. ACT-toxins consist of three moieties, 9,10-epoxy-8-hydroxy-9-methyl-decatrienoic acid (EDA), valine and a polyketide. ACT-toxin I is toxic to both citrus and pear; toxin II the 5''-deoxy derivative of ACT-toxin I, is highly toxic to pear and slightly toxic to citrus. On cellular level, ACT-toxins affect plasma membrane of susceptible cells and cause a sudden increase in loss of K(+) after a few minutes of toxin treatment. The acyl-CoA ligase ACTT1, the hydrolase ACTT2, the enoyl-CoA hydratases ACTT3 and ACTT6, and the acyl-CoA synthetase ACTT5 are all involved in the biosynthesis of the AK-, AF- and ACT-toxin common 9,10-epoxy-8-hydroxy-9-methyl-decatrienoic acid (EDA) structural moiety. The exact role of each enzyme, and of additional enzymes identified within the AF-toxin clusters have still to be determined. On the other hand, ACTTS1 to ACTTS4 are specific to the tangerine pathotype. The function of ACTTS3 is to elongate the polyketide chain portion of ACT-toxin that is unique to this toxin. The enoyl-reductase ACTTS2 might complement the missing enoyl-reductase (ER) domain in ACTTS3 in the synthesis of the polyketide portion of ACT-toxin. The roles of the nonribosomal peptide synthetases-related proteins ACTTS1 and ACTTS4 have also still not been elucidated. This Alternaria alternata (Alternaria rot fungus) protein is Abhydrolase domain-containing protein ACTT2.